We begin with the raw amino-acid sequence, 465 residues long: Mothers against decapentaplegic homolog 1 (465 aa).

N-acetylmethionine is present on methionine 1. Residues 12–136 (PAVKRLLGWK…YKRVESPVLP (125 aa)) enclose the MH1 domain. Residues cysteine 64, cysteine 109, cysteine 121, and histidine 126 each contribute to the Zn(2+) site. The interval 162-249 (NEPHMPLNAT…QPMDTNMMAP (88 aa)) is disordered. Residues 179 to 210 (PNSHPFPHSPNSSYPNSPGSSSSTYPHSPTSS) are compositionally biased toward low complexity. The span at 221 to 232 (DTPPPAYLPPED) shows a compositional bias: pro residues. Residues 271–465 (WCSIVYYELN…SPHNPISSVS (195 aa)) enclose the MH2 domain. Threonine 322 carries the phosphothreonine; by MINK1, TNIK and MAP4K4 modification. Residues 418–428 (KGWGAEYHRQD) are L3 loop. Phosphoserine occurs at positions 463 and 465.

The protein belongs to the dwarfin/SMAD family. In terms of assembly, found in a complex with SMAD4 and YY1. Interacts with HGS, NANOG and ZCCHC12. Upon C-terminus phosphorylation: forms trimers with another SMAD1 and the co-SMAD SMAD4. Interacts with PEBP2-alpha subunit, CREB-binding protein (CBP), p300, SMURF1, SMURF2, USP15 and HOXC8. Associates with ZNF423 or ZNF521 in response to BMP2 leading to activate transcription of BMP target genes. Interacts with SKOR1. Interacts (via MH2 domain) with LEMD3. Binding to LEMD3 results in at least a partial reduction of receptor-mediated phosphorylation. Forms a ternary complex with PSMB4 and OAZ1 before PSMB4 is incorporated into the 20S proteasome. Interacts (via MH2 domain) with FAM83G (via MH2 domain); in a SMAD4-independent manner. Interacts with ZC3H3. Interacts with TMEM119. Interacts (via MH1 and MH2 domains) with ZNF8. Interacts with RANBP3L; the interaction increases when SMAD1 is not phosphorylated and mediates SMAD1 nuclear export. Interacts with EGR1; this interaction inhibits SMAD1 dephosphorylation. Interacts with SMAD6. Interacts with YAP1. Interacts with MTMR4; negatively regulates BMP signaling through SMAD1 dephosphorylation and retention in endosomes. In terms of processing, phosphorylation of the C-terminal SVS motif by BMP type 1 receptor kinase activates SMAD1 by promoting dissociation from the receptor and trimerization with SMAD4. Phosphorylation by ERK2 MAP kinase in response to EGF or HGF prevents SMAD1 nuclear accumulation and transcriptional activity in response to BMP. Dephosphorylation, probably by PPM1A, induces its export from the nucleus to the cytoplasm. Dephosphorylation is inhibited by association with EGR1. Phosphorylation by CDK8/9 creates binding sites for YAP1, and subsequent phosphorylation by GSK3 switches off YAP1 binding and adds binding sites for SMURF1. Post-translationally, ubiquitinated by SMAD-specific E3 ubiquitin ligase SMURF1, leading to its degradation. Monoubiquitinated, leading to prevent DNA-binding. Deubiquitination by USP15 alleviates inhibition and promotes activation of TGF-beta target genes. Dephosphorylation, probably by PPM1A, induces its export from the nucleus to the cytoplasm. Phospho-SMAD1 is ubiquitinated by CHIP leading to disruption of the SMAD1-SMAD4 complex.

The protein resides in the cytoplasm. It is found in the nucleus. Functionally, transcriptional modulator that plays a role in various cellular processes, including embryonic development, cell differentiation, and tissue homeostasis. Upon BMP ligand binding to their receptors at the cell surface, is phosphorylated by activated type I BMP receptors (BMPRIs) and associates with SMAD4 to form an heteromeric complex which translocates into the nucleus acting as transcription factor. In turn, the hetero-trimeric complex recognizes cis-regulatory elements containing Smad Binding Elements (SBEs) to modulate the outcome of the signaling network. SMAD1/OAZ1/PSMB4 complex mediates the degradation of the CREBBP/EP300 repressor SNIP1. Positively regulates BMP4-induced expression of odontogenic development regulator MSX1 following IPO7-mediated nuclear import. This chain is Mothers against decapentaplegic homolog 1 (SMAD1), found in Bos taurus (Bovine).